Here is a 418-residue protein sequence, read N- to C-terminus: eIF5-mimic protein 2 (418 aa).

Over residues 1 to 14 (MNQKQQKPTLSGQR) the composition is skewed to polar residues. The segment at 1-25 (MNQKQQKPTLSGQRFKTRKRDEKER) is disordered. The 168-residue stretch at 246–413 (NQQTIGARKE…KNAEEESESE (168 aa)) folds into the W2 domain.

It belongs to the BZW family.

Translation initiation regulator which may repress repeat-associated non-AUG (RAN) initiated translation probably by acting as a competitive inhibitor of eukaryotic translation initiation factor 5 (EIF5) function. Enhances histone H4 gene transcription but does not seem to bind DNA directly. The polypeptide is eIF5-mimic protein 2 (BZW1) (Gallus gallus (Chicken)).